Reading from the N-terminus, the 126-residue chain is Large ribosomal subunit protein bL12 (126 aa).

The protein belongs to the bacterial ribosomal protein bL12 family. As to quaternary structure, homodimer. Part of the ribosomal stalk of the 50S ribosomal subunit. Forms a multimeric L10(L12)X complex, where L10 forms an elongated spine to which 2 to 4 L12 dimers bind in a sequential fashion. Binds GTP-bound translation factors.

Forms part of the ribosomal stalk which helps the ribosome interact with GTP-bound translation factors. Is thus essential for accurate translation. The sequence is that of Large ribosomal subunit protein bL12 from Francisella tularensis subsp. mediasiatica (strain FSC147).